A 229-amino-acid chain; its full sequence is MPSMAEIYVKELRERDPATVDTLFLDNAEDGQIGGLTDQLINLEMLSMVKCGLTTLAGFPTLPALTYLDISDNQLGDNASFDVLVKNAPDLKKITLASNKLSLDNLRCLKVLPNLFELDLSNNPSLGLLEDYREKMFEMIPSLKILDGCDVDGEEVEEEFAGEGGEDSEEGSGDEDGPGLSYLEKSQFSDDETDDYAPEGGDAEPRGTKRGASDNGEEPDNKKAAGDDE.

LRR repeat units follow at residues 19 to 40 (TVDT…TDQL), 42 to 63 (NLEM…PTLP), 64 to 85 (ALTY…DVLV), and 90 to 110 (DLKK…RCLK). Positions 124–164 (PSLGLLEDYREKMFEMIPSLKILDGCDVDGEEVEEEFAGEG) constitute an LRRCT domain. Over residues 155–177 (EVEEEFAGEGGEDSEEGSGDEDG) the composition is skewed to acidic residues. A disordered region spans residues 155-229 (EVEEEFAGEG…DNKKAAGDDE (75 aa)). Over residues 219–229 (PDNKKAAGDDE) the composition is skewed to basic and acidic residues.

Belongs to the ANP32 family.

The chain is Acidic leucine-rich nuclear phosphoprotein 32-related protein 1 from Caenorhabditis elegans.